Here is a 291-residue protein sequence, read N- to C-terminus: START domain-containing protein 10 (291 aa).

Met1 is modified (N-acetylmethionine). The interval 1 to 20 (MEKLAASTEPQGPRPVLGRE) is disordered. Residues 14 to 224 (RPVLGRESVQ…MYKACLKYPE (211 aa)) form the START domain. N6-succinyllysine is present on residues Lys94, Lys197, and Lys202. A phosphoserine mark is found at Ser253 and Ser259. A disordered region spans residues 260–291 (LENIDESAVAESREERMGGAGGEGSDDDTSLT). Phosphoserine; by CK2 is present on Ser284. Phosphoserine is present on Ser289.

In terms of processing, phosphorylation at Ser-284 by CK2 negatively regulates lipid transfer activity, possibly by decreasing membrane association.

It localises to the cell projection. The protein localises to the cilium. The protein resides in the flagellum. It is found in the cytoplasm. Its subcellular location is the membrane. May play metabolic roles in sperm maturation or fertilization. Phospholipid transfer protein that preferentially selects lipid species containing a palmitoyl or stearoyl chain on the sn-1 and an unsaturated fatty acyl chain (18:1 or 18:2) on the sn-2 position. Able to transfer phosphatidylcholine (PC) and phosphatidyetanolamline (PE) between membranes. In Homo sapiens (Human), this protein is START domain-containing protein 10 (STARD10).